The sequence spans 198 residues: Ras-related protein Rab-34, isoform NARR (198 aa).

13 consecutive repeat copies span residues 7 to 15 (PRDDVGSPR), 16 to 24 (PRVIVGTIR), 25 to 33 (PRVIVGTIR), 34 to 42 (PRVIVGSAR), 43 to 51 (ARPPPDGTP), 52 to 60 (RPQLAAEES), 61 to 69 (PRPRVIFGT), 70 to 78 (PRARVILGS), 79 to 87 (PRPRVIVSS), 88 to 96 (PWPAVVVAS), 97 to 105 (PRPRTPVGS), 106 to 114 (PWPRVVVGT), and 115 to 123 (PRPRVIVGS). Residues 7–125 (PRDDVGSPRP…RPRVIVGSPR (119 aa)) form a 13 x 9 AA approximate tandem-repeats of P-R-V-I-V-G-(S/T)-P-R region. Ser-13 bears the Phosphoserine mark. The segment at 37–64 (IVGSARARPPPDGTPRPQLAAEESPRPR) is disordered. Thr-69 carries the post-translational modification Phosphothreonine. Residues Ser-78, Ser-87, and Ser-96 each carry the phosphoserine modification. Over residues 94–121 (VASPRPRTPVGSPWPRVVVGTPRPRVIV) the composition is skewed to low complexity. The tract at residues 94 to 198 (VASPRPRTPV…GAPDRHRGQI (105 aa)) is disordered. At Ser-123 the chain carries Phosphoserine. Residues 145–157 (RRQDEHSGTRAEG) are compositionally biased toward basic and acidic residues. The span at 161–178 (GGAAPVPEEGGRFARAQR) shows a compositional bias: low complexity.

May interact with EIF5A and ERF1. Post-translationally, phosphorylated during M-phase.

The protein localises to the nucleus. The protein resides in the nucleolus. The protein is Ras-related protein Rab-34, isoform NARR (RAB34) of Homo sapiens (Human).